A 688-amino-acid chain; its full sequence is Coiled-coil domain-containing protein 157 (688 aa).

The span at 143–153 shows a compositional bias: polar residues; it reads ANQGETLTSKP. Disordered stretches follow at residues 143–162, 168–189, 322–341, 366–385, and 592–688; these read ANQG…PAGS, AQLV…ERDS, QAAR…QWER, QQRE…QAEA, and QGAE…ERPT. Residues 288–572 adopt a coiled-coil conformation; sequence KLVGLLRAQL…LSKIREVAQQ (285 aa). Residues 369-382 show a composition bias toward polar residues; sequence ESTQAVESKAQQLQ. Over residues 671 to 680 the composition is skewed to low complexity; that stretch reads SPSSGRASPA.

This chain is Coiled-coil domain-containing protein 157 (CCDC157), found in Bos taurus (Bovine).